A 351-amino-acid polypeptide reads, in one-letter code: DNA integrity scanning protein DisA (351 aa).

The DAC domain maps to 4–142; sequence RSGFWQVLQQ…GPMKYILRDF (139 aa). ATP is bound by residues Gly-71, Leu-89, and 102-106; that span reads TRHRT.

It belongs to the DisA family. Homooctamer. It depends on Mg(2+) as a cofactor.

It catalyses the reaction 2 ATP = 3',3'-c-di-AMP + 2 diphosphate. Functionally, participates in a DNA-damage check-point that is active prior to asymmetric division when DNA is damaged. DisA forms globular foci that rapidly scan along the chromosomes during sporulation, searching for lesions. When a lesion is present, DisA pauses at the lesion site. This triggers a cellular response that culminates in a temporary block in sporulation initiation. Also has diadenylate cyclase activity, catalyzing the condensation of 2 ATP molecules into cyclic di-AMP (c-di-AMP). c-di-AMP acts as a signaling molecule that couples DNA integrity with progression of sporulation. The rise in c-di-AMP level generated by DisA while scanning the chromosome, operates as a positive signal that advances sporulation; upon encountering a lesion, the DisA focus arrests at the damaged site and halts c-di-AMP synthesis. This Symbiobacterium thermophilum (strain DSM 24528 / JCM 14929 / IAM 14863 / T) protein is DNA integrity scanning protein DisA.